We begin with the raw amino-acid sequence, 816 residues long: Microbial collagenase (816 aa).

An N-terminal signal peptide occupies residues 1–27 (MSHIRFFPRHRLALACMLASVSSFSFA). Residue His-435 coordinates Zn(2+). Glu-436 is an active-site residue. His-439 serves as a coordination point for Zn(2+).

The protein belongs to the peptidase M9A family. Requires Zn(2+) as cofactor.

The protein resides in the secreted. The enzyme catalyses Digestion of native collagen in the triple helical region at Xaa-|-Gly bonds. With synthetic peptides, a preference is shown for Gly at P3 and P1', Pro and Ala at P2 and P2', and hydroxyproline, Ala or Arg at P3'.. In terms of biological role, possesses gelatinolytic activity. Can cause weak haemolysis on blood agar. This chain is Microbial collagenase (prt), found in Vibrio parahaemolyticus serotype O3:K6 (strain RIMD 2210633).